Here is a 360-residue protein sequence, read N- to C-terminus: Leukotriene B4 receptor 2 (360 aa).

Over 1-24 (MSVCYRPPGNETLLSWKGSRATGT) the chain is Extracellular. The N-linked (GlcNAc...) asparagine glycan is linked to N10. A helical transmembrane segment spans residues 25-45 (AFLLLAALLGLPGNGFVVWSL). Topologically, residues 46–60 (AGWRPTAGRPLAATL) are cytoplasmic. The chain crosses the membrane as a helical span at residues 61–81 (VLHLALADGAVLLLTPLFVAF). At 82-96 (LSQEAWPLGQVGCKA) the chain is on the extracellular side. Residues 97–117 (VYYVCALSMYASVLLTGLLSL) form a helical membrane-spanning segment. The Cytoplasmic segment spans residues 118–140 (QRCLAVTRPFLAPRLRSPALARR). The chain crosses the membrane as a helical span at residues 141-161 (LLLGVWLAALVLAVPAAVYRH). Over 162 to 185 (LWGGRVCQLCHPSPVHAAAHLSLE) the chain is Extracellular. Residues 186 to 206 (TLTAFVLPFGTVLGCYGVTLA) traverse the membrane as a helical segment. At 207-224 (RLRGARWGSGRQGTRVGR) the chain is on the cytoplasmic side. Residues 225-245 (LVSAIVLAFGLLWAPYHAVNL) form a helical membrane-spanning segment. Over 246–275 (LQAVAALAPPEGPLARLGGAGQAARAGTTA) the chain is Extracellular. A helical transmembrane segment spans residues 276–296 (LAFFSSSVNPVLYVFTAGDLL). At 297–360 (PRAGPRFLTR…GKTEKDSQEW (64 aa)) the chain is on the cytoplasmic side. A disordered region spans residues 311 to 360 (SGEARGGSRSREGTMELRTTPKLKVMGQGRGNGDPGGGDGGKTEKDSQEW). Gly residues predominate over residues 338–350 (QGRGNGDPGGGDG). Residues 351-360 (GKTEKDSQEW) are compositionally biased toward basic and acidic residues.

The protein belongs to the G-protein coupled receptor 1 family.

It is found in the cell membrane. Low-affinity receptor for leukotrienes including leukotriene B4. Mediates chemotaxis of granulocytes and macrophages. The response is mediated via G-proteins that activate a phosphatidylinositol-calcium second messenger system. This is Leukotriene B4 receptor 2 (Ltb4r2) from Mus musculus (Mouse).